The sequence spans 461 residues: Fumarate hydratase class II (461 aa).

Residues 99 to 101 (SGT), arginine 127, 130 to 133 (HPND), 140 to 142 (SSN), and threonine 188 each bind substrate. Histidine 189 acts as the Proton donor/acceptor in catalysis. Serine 319 is a catalytic residue. Substrate-binding positions include serine 320 and 325–327 (KVN).

The protein belongs to the class-II fumarase/aspartase family. Fumarase subfamily. As to quaternary structure, homotetramer.

It is found in the cytoplasm. It catalyses the reaction (S)-malate = fumarate + H2O. The protein operates within carbohydrate metabolism; tricarboxylic acid cycle; (S)-malate from fumarate: step 1/1. Its function is as follows. Involved in the TCA cycle. Catalyzes the stereospecific interconversion of fumarate to L-malate. In Chromobacterium violaceum (strain ATCC 12472 / DSM 30191 / JCM 1249 / CCUG 213 / NBRC 12614 / NCIMB 9131 / NCTC 9757 / MK), this protein is Fumarate hydratase class II.